A 61-amino-acid polypeptide reads, in one-letter code: Metallothionein-2B (61 aa).

Position 1 is an N-acetylmethionine (Met-1). The tract at residues Met-1–Cys-29 is beta. A divalent metal cation-binding residues include Cys-5, Cys-7, Cys-13, Cys-15, Cys-19, Cys-21, Cys-24, Cys-26, Cys-29, Cys-33, Cys-34, Cys-36, Cys-37, Cys-41, Cys-44, Cys-48, Cys-50, Cys-57, Cys-59, and Cys-60. Positions Lys-30–Ala-61 are alpha.

The protein belongs to the metallothionein superfamily. Type 1 family. As to quaternary structure, monomer.

Metallothioneins have a high content of cysteine residues that bind various heavy metals; these proteins are transcriptionally regulated by both heavy metals and glucocorticoids. The protein is Metallothionein-2B (MT2B) of Sus scrofa (Pig).